Here is an 81-residue protein sequence, read N- to C-terminus: ATP synthase subunit c, chloroplastic (81 aa).

2 helical membrane passes run 4 to 24 (VISA…SIGP) and 57 to 77 (LAFM…LLFA).

It belongs to the ATPase C chain family. As to quaternary structure, F-type ATPases have 2 components, F(1) - the catalytic core - and F(0) - the membrane proton channel. F(1) has five subunits: alpha(3), beta(3), gamma(1), delta(1), epsilon(1). F(0) has four main subunits: a(1), b(1), b'(1) and c(10-14). The alpha and beta chains form an alternating ring which encloses part of the gamma chain. F(1) is attached to F(0) by a central stalk formed by the gamma and epsilon chains, while a peripheral stalk is formed by the delta, b and b' chains.

It is found in the plastid. The protein resides in the chloroplast thylakoid membrane. Functionally, f(1)F(0) ATP synthase produces ATP from ADP in the presence of a proton or sodium gradient. F-type ATPases consist of two structural domains, F(1) containing the extramembraneous catalytic core and F(0) containing the membrane proton channel, linked together by a central stalk and a peripheral stalk. During catalysis, ATP synthesis in the catalytic domain of F(1) is coupled via a rotary mechanism of the central stalk subunits to proton translocation. In terms of biological role, key component of the F(0) channel; it plays a direct role in translocation across the membrane. A homomeric c-ring of between 10-14 subunits forms the central stalk rotor element with the F(1) delta and epsilon subunits. In Zygnema circumcarinatum (Green alga), this protein is ATP synthase subunit c, chloroplastic.